A 426-amino-acid polypeptide reads, in one-letter code: Actin-like protein 6B (426 aa).

An essential for mediating its function in dendritic development; may contribute to neuronal-specific targeting region spans residues 39 to 82 (TTVGLLAAEEGGGLELEGDKEKKGKIFHIDTNALHVPRDGAEVM).

The protein belongs to the actin family. As to quaternary structure, component of the multiprotein chromatin-remodeling complexes SWI/SNF: SWI/SNF-A (BAF), SWI/SNF-B (PBAF) and related complexes. The canonical complex contains a catalytic subunit (either SMARCA4/BRG1/BAF190A or SMARCA2/BRM/BAF190B) and at least SMARCE1, ACTL6A/BAF53, SMARCC1/BAF155, SMARCC2/BAF170 and SMARCB1/SNF5/BAF47. Other subunits specific to each of the complexes may also be present permitting several possible combinations developmentally and tissue specific. Component of the BAF complex, which includes at least actin (ACTB), ARID1A/BAF250A, ARID1B/BAF250B, SMARCA2/BRM, SMARCA4/BRG1/BAF190A, ACTL6A/BAF53, ACTL6B/BAF53B, SMARCE1/BAF57, SMARCC1/BAF155, SMARCC2/BAF170, SMARCB1/SNF5/INI1 and one or more SMARCD1/BAF60A, SMARCD2/BAF60B, or SMARCD3/BAF60C. Component of neuron-specific chromatin remodeling complex (nBAF complex) composed of at least, ARID1A/BAF250A or ARID1B/BAF250B, SMARCD1/BAF60A or SMARCD2/BAF60B or SMARCD3/BAF60C, SMARCA2/BRM/BAF190B, SMARCA4/BRG1/BAF190A, SMARCB1/BAF47, SMARCC1/BAF155, SMARCE1/BAF57, SMARCC2/BAF170, DPF1/BAF45B, DPF3/BAF45C, ACTL6B/BAF53B and actin (ACTB). Note that the nBAF complex is polymorphic in regard to the ATPase, SMARCA2 and SMARCA4 occupying mutually exclusive positions. May be a component of the SWI/SNF-B (PBAF) chromatin remodeling complex, at least composed of SMARCA4/BRG1, SMARCB1/BAF47/SNF5, ACTL6A/BAF53A or ACTL6B/BAF53B, SMARCE1/BAF57, SMARCD1/BAF60A, SMARCD2/BAF60B, perhaps SMARCD3/BAF60C, SMARCC1/BAF155, SMARCC2/BAF170, PBRM1/BAF180, ARID2/BAF200 and actin.

The protein resides in the nucleus. In terms of biological role, involved in transcriptional activation and repression of select genes by chromatin remodeling (alteration of DNA-nucleosome topology). Component of SWI/SNF chromatin remodeling complexes that carry out key enzymatic activities, changing chromatin structure by altering DNA-histone contacts within a nucleosome in an ATP-dependent manner. Belongs to the neuron-specific chromatin remodeling complex (nBAF complex), as such plays a role in remodeling mononucleosomes in an ATP-dependent fashion, and is required for postmitotic neural development and dendritic outgrowth. During neural development a switch from a stem/progenitor to a postmitotic chromatin remodeling mechanism occurs as neurons exit the cell cycle and become committed to their adult state. The transition from proliferating neural stem/progenitor cells to postmitotic neurons requires a switch in subunit composition of the npBAF and nBAF complexes. As neural progenitors exit mitosis and differentiate into neurons, npBAF complexes which contain ACTL6A/BAF53A and PHF10/BAF45A, are exchanged for homologous alternative ACTL6B/BAF53B and DPF1/BAF45B or DPF3/BAF45C subunits in neuron-specific complexes (nBAF). The npBAF complex is essential for the self-renewal/proliferative capacity of the multipotent neural stem cells. The nBAF complex along with CREST plays a role regulating the activity of genes essential for dendrite growth. ACTL6B/BAF53B is not essential for assembly of the nBAF complex but is required for targeting the complex and CREST to the promoter of genes essential for dendritic growth. Essential for neuronal maturation and dendrite development. This chain is Actin-like protein 6B, found in Homo sapiens (Human).